Here is a 216-residue protein sequence, read N- to C-terminus: Golgi to ER traffic protein 1 (216 aa).

Residues 1–9 (MFDISSSNL) are Lumenal-facing. A helical transmembrane segment spans residues 10–29 (LISVLVVLFAKQLINAVGKA). The Cytoplasmic portion of the chain corresponds to 30 to 116 (TLENIGWSAY…YISKYIGYMI (87 aa)). A coiled-coil region spans residues 54–105 (LDQKNVELAKVSKERKSISAQDQYARWTKLNRQFDKLTGEINKLKEETSASR). Residues 117–137 (LVTTTLPIWFFRVWFRKAVLF) form a helical membrane-spanning segment. The Lumenal portion of the chain corresponds to 138–161 (YFPTGVLPHYLEWFLALPFITTGG). Residues 162–178 (VGLTIWMSAVNNVVSSV) traverse the membrane as a helical segment. Residues 179–216 (IFLVKFPFEKEVPFPSKEVGNEKTSINKEEVSGTPAAN) lie on the Cytoplasmic side of the membrane. Residues 193-216 (PSKEVGNEKTSINKEEVSGTPAAN) form a disordered region. A compositionally biased stretch (basic and acidic residues) spans 197–209 (VGNEKTSINKEEV).

The protein belongs to the WRB/GET1 family. In terms of assembly, component of the Golgi to ER traffic (GET) complex, which is composed of GET1, GET2 and GET3. Within the complex, GET1 and GET2 form a heterotetramer which is stabilized by phosphatidylinositol binding and which binds to the GET3 homodimer.

The protein resides in the endoplasmic reticulum membrane. It is found in the golgi apparatus membrane. Functionally, required for the post-translational delivery of tail-anchored (TA) proteins to the endoplasmic reticulum. Together with GET2, acts as a membrane receptor for soluble GET3, which recognizes and selectively binds the transmembrane domain of TA proteins in the cytosol. The GET complex cooperates with the HDEL receptor ERD2 to mediate the ATP-dependent retrieval of resident ER proteins that contain a C-terminal H-D-E-L retention signal from the Golgi to the ER. This chain is Golgi to ER traffic protein 1, found in Debaryomyces hansenii (strain ATCC 36239 / CBS 767 / BCRC 21394 / JCM 1990 / NBRC 0083 / IGC 2968) (Yeast).